A 30-amino-acid polypeptide reads, in one-letter code: Snaclec coagulation factor IX/factor X-binding protein subunit A (30 aa).

A C-type lectin domain is found at 1-30 (DCPSDWSPYEGHCYKHFIKWMNNEDAERFC). An intrachain disulfide couples C2 to C13.

This sequence belongs to the snaclec family. As to quaternary structure, heterodimer of subunits A and B; disulfide-linked. As to expression, expressed by the venom gland.

It localises to the secreted. Functionally, anticoagulant protein which binds to the gamma-carboxyglutamic acid-domain regions of factors IX (F9) and factor X (F10) in the presence of calcium with a 1 to 1 stoichiometry. The polypeptide is Snaclec coagulation factor IX/factor X-binding protein subunit A (Bothrops jararaca (Jararaca)).